Here is a 644-residue protein sequence, read N- to C-terminus: Exoribonuclease 2 (644 aa).

One can recognise an RNB domain in the interval 189 to 516; that stretch reads RQDLTALNFV…NHRLLKAVIK (328 aa). An S1 motif domain is found at 561–643; that stretch reads DTRFAAEIID…DTRSIIARPA (83 aa).

The protein belongs to the RNR ribonuclease family. RNase II subfamily.

Its subcellular location is the cytoplasm. The catalysed reaction is Exonucleolytic cleavage in the 3'- to 5'-direction to yield nucleoside 5'-phosphates.. Involved in mRNA degradation. Hydrolyzes single-stranded polyribonucleotides processively in the 3' to 5' direction. This Salmonella arizonae (strain ATCC BAA-731 / CDC346-86 / RSK2980) protein is Exoribonuclease 2.